The chain runs to 572 residues: Formate--tetrahydrofolate ligase (572 aa).

65-72 (TPLGEGKT) serves as a coordination point for ATP.

Belongs to the formate--tetrahydrofolate ligase family.

The catalysed reaction is (6S)-5,6,7,8-tetrahydrofolate + formate + ATP = (6R)-10-formyltetrahydrofolate + ADP + phosphate. It participates in one-carbon metabolism; tetrahydrofolate interconversion. This chain is Formate--tetrahydrofolate ligase, found in Chloroflexus aurantiacus (strain ATCC 29366 / DSM 635 / J-10-fl).